Here is a 330-residue protein sequence, read N- to C-terminus: D-cysteine desulfhydrase (330 aa).

Lysine 52 carries the post-translational modification N6-(pyridoxal phosphate)lysine.

This sequence belongs to the ACC deaminase/D-cysteine desulfhydrase family. As to quaternary structure, homodimer. Pyridoxal 5'-phosphate is required as a cofactor.

It catalyses the reaction D-cysteine + H2O = hydrogen sulfide + pyruvate + NH4(+) + H(+). Functionally, catalyzes the alpha,beta-elimination reaction of D-cysteine and of several D-cysteine derivatives. It could be a defense mechanism against D-cysteine. The polypeptide is D-cysteine desulfhydrase (Serratia proteamaculans (strain 568)).